A 1709-amino-acid polypeptide reads, in one-letter code: Intraflagellar transport protein 122 (1709 aa).

WD repeat units follow at residues 51 to 89 and 132 to 171; these read TQHP…ALFK and SFKG…LNSC. The tract at residues 209–229 is disordered; it reads TIPQTVTPSASASGRSGSGKR. A WD 3 repeat occupies 634 to 673; it reads LHRSPIVSLDISPDRKYISVVDRSDVVSVYKFLDDSEIVL. Residues 1231-1256 form an LRR 1 repeat; that stretch reads IEALERLRLSGNTSKEAIIIKQLIDA. Positions 1378–1404 are disordered; it reads LSGEDTVKASSQRSKKDNPPSLRSTIG. Residues 1414–1436 form an LRR 2 repeat; sequence LGSLAHIDLGINNMNIPPGISEL.

The protein localises to the cell projection. It is found in the cilium. Its subcellular location is the flagellum. It localises to the cytoplasm. The protein resides in the cytoskeleton. The protein localises to the flagellum axoneme. It is found in the flagellum basal body. Its function is as follows. Component of the intraflagellar transport complex A (IFT-A) involved in flagellar assembly. The sequence is that of Intraflagellar transport protein 122 from Giardia intestinalis (strain ATCC 50803 / WB clone C6) (Giardia lamblia).